We begin with the raw amino-acid sequence, 360 residues long: Phospho-N-acetylmuramoyl-pentapeptide-transferase (360 aa).

Helical transmembrane passes span 27–47, 71–91, 98–118, 142–162, 168–188, 199–219, 236–256, 263–283, 288–308, and 338–358; these read VMAV…LIRF, TPTM…LLWA, VWIV…DDYL, LVLA…TFVM, YMPY…VGSS, GLAI…AYLT, ASEL…FLWF, VFMG…IAVL, ILLV…ILQV, and VIVR…VTLK.

It belongs to the glycosyltransferase 4 family. MraY subfamily. Mg(2+) is required as a cofactor.

Its subcellular location is the cell inner membrane. The catalysed reaction is UDP-N-acetyl-alpha-D-muramoyl-L-alanyl-gamma-D-glutamyl-meso-2,6-diaminopimeloyl-D-alanyl-D-alanine + di-trans,octa-cis-undecaprenyl phosphate = di-trans,octa-cis-undecaprenyl diphospho-N-acetyl-alpha-D-muramoyl-L-alanyl-D-glutamyl-meso-2,6-diaminopimeloyl-D-alanyl-D-alanine + UMP. Its pathway is cell wall biogenesis; peptidoglycan biosynthesis. Functionally, catalyzes the initial step of the lipid cycle reactions in the biosynthesis of the cell wall peptidoglycan: transfers peptidoglycan precursor phospho-MurNAc-pentapeptide from UDP-MurNAc-pentapeptide onto the lipid carrier undecaprenyl phosphate, yielding undecaprenyl-pyrophosphoryl-MurNAc-pentapeptide, known as lipid I. The protein is Phospho-N-acetylmuramoyl-pentapeptide-transferase of Psychromonas ingrahamii (strain DSM 17664 / CCUG 51855 / 37).